The chain runs to 201 residues: FMN-dependent NADH:quinone oxidoreductase (201 aa).

92-95 (MWNL) is an FMN binding site.

The protein belongs to the azoreductase type 1 family. As to quaternary structure, homodimer. It depends on FMN as a cofactor.

It carries out the reaction 2 a quinone + NADH + H(+) = 2 a 1,4-benzosemiquinone + NAD(+). The enzyme catalyses N,N-dimethyl-1,4-phenylenediamine + anthranilate + 2 NAD(+) = 2-(4-dimethylaminophenyl)diazenylbenzoate + 2 NADH + 2 H(+). Functionally, quinone reductase that provides resistance to thiol-specific stress caused by electrophilic quinones. Its function is as follows. Also exhibits azoreductase activity. Catalyzes the reductive cleavage of the azo bond in aromatic azo compounds to the corresponding amines. In Caldicellulosiruptor saccharolyticus (strain ATCC 43494 / DSM 8903 / Tp8T 6331), this protein is FMN-dependent NADH:quinone oxidoreductase.